The chain runs to 435 residues: Galactomannan galactosyltransferase 1 (435 aa).

The Cytoplasmic segment spans residues 1 to 20 (MAKFGSRNKSPKWISNGCCF). Residues 21-41 (LLGAFTALLLLWGLCSFIIPI) form a helical; Signal-anchor for type II membrane protein membrane-spanning segment. Residues 42–435 (PNTDPKLNSV…SPLPFGYPAA (394 aa)) are Lumenal-facing. Residues asparagine 230 and asparagine 328 are each glycosylated (N-linked (GlcNAc...) asparagine). The stretch at 321 to 354 (EIVKTYENISERYDEVERKVEGLRRRHAEKVSEK) forms a coiled coil.

It belongs to the glycosyltransferase 34 family.

Its subcellular location is the golgi apparatus membrane. In terms of biological role, galactomannan galactosyltransferase (GMGT) involved in galactomannan biosynthesis in seed endosperm. GMGT specificity is an important factor regulating the distribution and amount of alpha-1,6-galactose (Gal) substitution of the beta-1,4-linked mannan backbone. The chain is Galactomannan galactosyltransferase 1 (GMGT1) from Cyamopsis tetragonoloba (Guar).